A 123-amino-acid polypeptide reads, in one-letter code: Large ribosomal subunit protein uL14 (123 aa).

It belongs to the universal ribosomal protein uL14 family. In terms of assembly, part of the 50S ribosomal subunit. Forms a cluster with proteins L3 and L19. In the 70S ribosome, L14 and L19 interact and together make contacts with the 16S rRNA in bridges B5 and B8.

Its function is as follows. Binds to 23S rRNA. Forms part of two intersubunit bridges in the 70S ribosome. The sequence is that of Large ribosomal subunit protein uL14 from Actinobacillus pleuropneumoniae serotype 7 (strain AP76).